A 362-amino-acid chain; its full sequence is Phosphoserine aminotransferase (362 aa).

Residues serine 9 and arginine 42 each coordinate L-glutamate. Pyridoxal 5'-phosphate contacts are provided by residues 76 to 77 (GR), tryptophan 102, threonine 153, aspartate 174, and glutamine 197. At lysine 198 the chain carries N6-(pyridoxal phosphate)lysine. 239–240 (NT) provides a ligand contact to pyridoxal 5'-phosphate.

This sequence belongs to the class-V pyridoxal-phosphate-dependent aminotransferase family. SerC subfamily. Homodimer. Pyridoxal 5'-phosphate is required as a cofactor.

The protein resides in the cytoplasm. The enzyme catalyses O-phospho-L-serine + 2-oxoglutarate = 3-phosphooxypyruvate + L-glutamate. The catalysed reaction is 4-(phosphooxy)-L-threonine + 2-oxoglutarate = (R)-3-hydroxy-2-oxo-4-phosphooxybutanoate + L-glutamate. Its pathway is amino-acid biosynthesis; L-serine biosynthesis; L-serine from 3-phospho-D-glycerate: step 2/3. The protein operates within cofactor biosynthesis; pyridoxine 5'-phosphate biosynthesis; pyridoxine 5'-phosphate from D-erythrose 4-phosphate: step 3/5. Functionally, catalyzes the reversible conversion of 3-phosphohydroxypyruvate to phosphoserine and of 3-hydroxy-2-oxo-4-phosphonooxybutanoate to phosphohydroxythreonine. This Shigella dysenteriae serotype 1 (strain Sd197) protein is Phosphoserine aminotransferase.